The following is a 306-amino-acid chain: Zinc finger protein 625 (306 aa).

The C2H2-type 1; degenerate zinc-finger motif lies at 31–53 (PRVKSCGEVSVGHASLNRHHRAD). 8 C2H2-type zinc fingers span residues 69 to 91 (YKCT…EWAH), 97 to 119 (YDCE…RIMH), 125 to 147 (YKCN…KRTH), 153 to 175 (YECK…ERTH), 181 to 203 (YECS…KITH), 209 to 231 (YECK…ERTH), 237 to 259 (YECK…GRTH), and 265 to 287 (YECK…ERTH). The residue at position 209 (Tyr-209) is a Phosphotyrosine. Residues 287–306 (HTGEKPCSSNTSKGQGEKIA) form a disordered region.

The protein belongs to the krueppel C2H2-type zinc-finger protein family.

The protein localises to the nucleus. May be involved in transcriptional regulation. The polypeptide is Zinc finger protein 625 (ZNF625) (Homo sapiens (Human)).